The following is a 432-amino-acid chain: Zinc finger protein 829 (432 aa).

The 72-residue stretch at 35–106 (VMFRDVSIDF…DRELTRGLCS (72 aa)) folds into the KRAB domain. The C2H2-type 1 zinc finger occupies 156–178 (WECKICGKTFNQNSQFIQHQRIH). The C2H2-type 2; degenerate zinc finger occupies 184–206 (YESKEYGKSFSRGSLVTRHQRIH). 8 C2H2-type zinc fingers span residues 212 to 234 (YECK…QRIH), 240 to 262 (YECK…QRIH), 268 to 290 (YECK…LRIH), 296 to 318 (YECK…QRMH), 324 to 346 (YECK…HRIH), 352 to 374 (YECE…QRIH), 380 to 402 (YECN…QRIH), and 408 to 430 (YDCK…EGIH).

The protein belongs to the krueppel C2H2-type zinc-finger protein family.

The protein resides in the nucleus. May be involved in transcriptional regulation. This chain is Zinc finger protein 829 (ZNF829), found in Homo sapiens (Human).